We begin with the raw amino-acid sequence, 380 residues long: Pectin lyase (380 aa).

The N-terminal stretch at 1–20 (MRSASILSAALAAFAPLASA) is a signal peptide. The N-linked (GlcNAc...) asparagine glycan is linked to N130.

This sequence belongs to the polysaccharide lyase 1 family.

It localises to the secreted. The catalysed reaction is Eliminative cleavage of (1-&gt;4)-alpha-D-galacturonan methyl ester to give oligosaccharides with 4-deoxy-6-O-methyl-alpha-D-galact-4-enuronosyl groups at their non-reducing ends.. The chain is Pectin lyase (PNLA) from Colletotrichum gloeosporioides (Anthracnose fungus).